We begin with the raw amino-acid sequence, 117 residues long: DNA-directed RNA polymerase subunit omega (117 aa).

Residues 96 to 105 (KEEAEEEAKQ) show a composition bias toward basic and acidic residues. Residues 96-117 (KEEAEEEAKQKNSRAAKAAAAE) are disordered. Positions 108–117 (SRAAKAAAAE) are enriched in low complexity.

This sequence belongs to the RNA polymerase subunit omega family. The RNAP catalytic core consists of 2 alpha, 1 beta, 1 beta' and 1 omega subunit. When a sigma factor is associated with the core the holoenzyme is formed, which can initiate transcription.

It carries out the reaction RNA(n) + a ribonucleoside 5'-triphosphate = RNA(n+1) + diphosphate. In terms of biological role, promotes RNA polymerase assembly. Latches the N- and C-terminal regions of the beta' subunit thereby facilitating its interaction with the beta and alpha subunits. This Lactococcus lactis subsp. cremoris (strain SK11) protein is DNA-directed RNA polymerase subunit omega.